A 430-amino-acid chain; its full sequence is Adenylosuccinate synthetase (430 aa).

Residues 12 to 18 and 40 to 42 each bind GTP; these read GDEGKGK and GHT. Aspartate 13 (proton acceptor) is an active-site residue. 2 residues coordinate Mg(2+): aspartate 13 and glycine 40. IMP contacts are provided by residues 13–16, 38–41, threonine 128, arginine 142, glutamine 223, threonine 238, and arginine 302; these read DEGK and NAGH. Histidine 41 serves as the catalytic Proton donor. Position 298–304 (298–304) interacts with substrate; the sequence is TTTGRPR. GTP-binding positions include arginine 304, 330-332, and 412-414; these read LLD and SVG.

Belongs to the adenylosuccinate synthetase family. In terms of assembly, homodimer. Requires Mg(2+) as cofactor.

The protein localises to the cytoplasm. It catalyses the reaction IMP + L-aspartate + GTP = N(6)-(1,2-dicarboxyethyl)-AMP + GDP + phosphate + 2 H(+). Its pathway is purine metabolism; AMP biosynthesis via de novo pathway; AMP from IMP: step 1/2. Its function is as follows. Plays an important role in the de novo pathway of purine nucleotide biosynthesis. Catalyzes the first committed step in the biosynthesis of AMP from IMP. This chain is Adenylosuccinate synthetase, found in Listeria innocua serovar 6a (strain ATCC BAA-680 / CLIP 11262).